The sequence spans 169 residues: Transcription antitermination protein NusB (169 aa).

The protein belongs to the NusB family.

Involved in transcription antitermination. Required for transcription of ribosomal RNA (rRNA) genes. Binds specifically to the boxA antiterminator sequence of the ribosomal RNA (rrn) operons. The protein is Transcription antitermination protein NusB of Deinococcus geothermalis (strain DSM 11300 / CIP 105573 / AG-3a).